The sequence spans 326 residues: tRNA dimethylallyltransferase 2 (326 aa).

14–21 (GPTASGKT) serves as a coordination point for ATP. 16 to 21 (TASGKT) contacts substrate. Positions 39–42 (DSMQ) are interaction with substrate tRNA.

The protein belongs to the IPP transferase family. In terms of assembly, monomer. Mg(2+) is required as a cofactor.

The enzyme catalyses adenosine(37) in tRNA + dimethylallyl diphosphate = N(6)-dimethylallyladenosine(37) in tRNA + diphosphate. Functionally, catalyzes the transfer of a dimethylallyl group onto the adenine at position 37 in tRNAs that read codons beginning with uridine, leading to the formation of N6-(dimethylallyl)adenosine (i(6)A). This is tRNA dimethylallyltransferase 2 from Geotalea daltonii (strain DSM 22248 / JCM 15807 / FRC-32) (Geobacter daltonii).